The chain runs to 377 residues: Multiple sugar-binding transport ATP-binding protein MsmK (377 aa).

In terms of domain architecture, ABC transporter spans 4–246; it reads LNLNHIYKKY…PANKFVAGFI (243 aa). An ATP-binding site is contributed by 38–45; that stretch reads GPSGCGKS.

Belongs to the ABC transporter superfamily.

The protein localises to the cell membrane. Functionally, involved in a binding protein-dependent transport system responsible for the uptake of melibiose, raffinose and isomaltotriose. Probably responsible for energy coupling to the transport system. The polypeptide is Multiple sugar-binding transport ATP-binding protein MsmK (msmK) (Streptococcus mutans serotype c (strain ATCC 700610 / UA159)).